The primary structure comprises 172 residues: Adenine phosphoribosyltransferase (172 aa).

Belongs to the purine/pyrimidine phosphoribosyltransferase family. Homodimer.

It is found in the cytoplasm. It carries out the reaction AMP + diphosphate = 5-phospho-alpha-D-ribose 1-diphosphate + adenine. The protein operates within purine metabolism; AMP biosynthesis via salvage pathway; AMP from adenine: step 1/1. Its function is as follows. Catalyzes a salvage reaction resulting in the formation of AMP, that is energically less costly than de novo synthesis. This is Adenine phosphoribosyltransferase from Ligilactobacillus salivarius (strain UCC118) (Lactobacillus salivarius).